The sequence spans 423 residues: Proline racemase A (423 aa).

An N-terminal signal peptide occupies residues 1–31 (MRKSVCPKQKFFFSAFPFFFFFCVFPLISRT). Residue Cys-160 is the Proton acceptor of the active site. 161–162 (GH) is a substrate binding site. N-linked (GlcNAc...) asparagine glycans are attached at residues Asn-213, Asn-266, and Asn-282. Residue Asp-326 coordinates substrate. The active-site Proton donor is Cys-330. 331 to 332 (GT) serves as a coordination point for substrate.

The protein belongs to the proline racemase family. Homodimer.

It is found in the secreted. It localises to the membrane. The protein localises to the cytoplasm. The catalysed reaction is L-proline = D-proline. With respect to regulation, inhibited by maleic acid, iodoacetamide, iodoacetate and, most particularly, pyrrole-2-carboxylic acid. In terms of biological role, catalyzes the interconversion of L- and D-proline. Secreted isoform 1 contributes to parasite immune evasion by acting as a B-cell mitogen. Probably involved in parasite differentiation and infectivity. This Trypanosoma cruzi (strain CL Brener) protein is Proline racemase A (PA45-A).